Here is a 387-residue protein sequence, read N- to C-terminus: Patatin group D-2 (387 aa).

An N-terminal signal peptide occupies residues 1–23 (MATTKSFLILIVMILATTSSTFA). A PNPLA domain is found at 32 to 230 (LSIDGGGIKG…TVADPALLSI (199 aa)). The short motif at 36–41 (GGGIKG) is the GXGXXG element. Residues 75–79 (GTSTG) carry the GXSXG motif. The Nucleophile role is filled by S77. A glycan (N-linked (GlcNAc...) asparagine) is linked at N115. Catalysis depends on D216, which acts as the Proton acceptor. The DGA/G signature appears at 216-218 (DGA). Residues 361 to 385 (ETYEEALKRFAKLLSDRKKLRANKA) adopt a coiled-coil conformation.

It belongs to the patatin family. Tuber.

The protein localises to the vacuole. Probable lipolytic acyl hydrolase (LAH), an activity which is thought to be involved in the response of tubers to pathogens. In Solanum tuberosum (Potato), this protein is Patatin group D-2.